Here is a 368-residue protein sequence, read N- to C-terminus: Agmatine deiminase (368 aa).

C357 functions as the Amidino-cysteine intermediate in the catalytic mechanism.

The protein belongs to the agmatine deiminase family. In terms of assembly, homodimer.

It catalyses the reaction agmatine + H2O = N-carbamoylputrescine + NH4(+). It participates in amine and polyamine biosynthesis; putrescine biosynthesis via agmatine pathway; N-carbamoylputrescine from agmatine: step 1/1. Its function is as follows. Mediates the hydrolysis of agmatine into N-carbamoylputrescine in the arginine decarboxylase (ADC) pathway of putrescine biosynthesis, a basic polyamine. This is Agmatine deiminase from Stutzerimonas stutzeri (strain A1501) (Pseudomonas stutzeri).